The sequence spans 376 residues: Succinyl-diaminopimelate desuccinylase (376 aa).

Zn(2+) is bound at residue histidine 67. The active site involves aspartate 69. Aspartate 100 lines the Zn(2+) pocket. Glutamate 134 (proton acceptor) is an active-site residue. Zn(2+)-binding residues include glutamate 135, glutamate 163, and histidine 349.

The protein belongs to the peptidase M20A family. DapE subfamily. In terms of assembly, homodimer. It depends on Zn(2+) as a cofactor. Co(2+) is required as a cofactor.

It catalyses the reaction N-succinyl-(2S,6S)-2,6-diaminopimelate + H2O = (2S,6S)-2,6-diaminopimelate + succinate. The protein operates within amino-acid biosynthesis; L-lysine biosynthesis via DAP pathway; LL-2,6-diaminopimelate from (S)-tetrahydrodipicolinate (succinylase route): step 3/3. In terms of biological role, catalyzes the hydrolysis of N-succinyl-L,L-diaminopimelic acid (SDAP), forming succinate and LL-2,6-diaminopimelate (DAP), an intermediate involved in the bacterial biosynthesis of lysine and meso-diaminopimelic acid, an essential component of bacterial cell walls. The chain is Succinyl-diaminopimelate desuccinylase from Pseudoalteromonas atlantica (strain T6c / ATCC BAA-1087).